The chain runs to 313 residues: L-lactate dehydrogenase 1 (313 aa).

NAD(+) contacts are provided by Val15, Asp36, Arg41, and Tyr66. Residues Gln83, Arg89, and 121–124 each bind substrate; that span reads NPVD. NAD(+) contacts are provided by residues 119 to 121 and Ser144; that span reads ASN. Residue 149 to 152 coordinates substrate; it reads DTAR. Beta-D-fructose 1,6-bisphosphate contacts are provided by Arg154 and His169. His176 (proton acceptor) is an active-site residue. The residue at position 218 (Tyr218) is a Phosphotyrosine. Thr227 serves as a coordination point for substrate.

Belongs to the LDH/MDH superfamily. LDH family. As to quaternary structure, homotetramer.

Its subcellular location is the cytoplasm. The catalysed reaction is (S)-lactate + NAD(+) = pyruvate + NADH + H(+). It functions in the pathway fermentation; pyruvate fermentation to lactate; (S)-lactate from pyruvate: step 1/1. With respect to regulation, allosterically activated by fructose 1,6-bisphosphate (FBP). In terms of biological role, catalyzes the conversion of lactate to pyruvate. This is L-lactate dehydrogenase 1 from Listeria monocytogenes serotype 4b (strain F2365).